A 284-amino-acid polypeptide reads, in one-letter code: L-ribulose-5-phosphate 3-epimerase UlaE (284 aa).

Belongs to the L-ribulose-5-phosphate 3-epimerase family.

The catalysed reaction is L-ribulose 5-phosphate = L-xylulose 5-phosphate. It participates in cofactor degradation; L-ascorbate degradation; D-xylulose 5-phosphate from L-ascorbate: step 3/4. In terms of biological role, catalyzes the isomerization of L-xylulose-5-phosphate to L-ribulose-5-phosphate. Is involved in the anaerobic L-ascorbate utilization. This is L-ribulose-5-phosphate 3-epimerase UlaE from Escherichia coli O157:H7 (strain EC4115 / EHEC).